The sequence spans 574 residues: Protein OBERON 2 (574 aa).

Polar residues-rich tracts occupy residues 1-10 (MGTSSGSNHP) and 65-76 (SMSQKTEPDSME). Positions 1-76 (MGTSSGSNHP…SQKTEPDSME (76 aa)) are disordered. Residues 226 to 291 (LCMCTICNKF…VFKCRACNRT (66 aa)) form a PHD-type zinc finger. Positions 416 to 524 (KKARMALETC…LFEKIKLQEN (109 aa)) form a coiled coil.

As to quaternary structure, self-interacts. Interacts with OBE1, OBE3 and OBE4. Binds to VPg of pea seed borne mosaic virus (PSbMV), turnip mosaic virus (TuMV) and lettuce mosaic virus (LMV), but not with VPg of tobacco etch virus (TEV), cowpea mosaic virus (CPMV), tomato black ring virus (TBRV) and grapevine fan leaf virus (GFLV). As to expression, expressed in roots, seedlings, stems, leaves, flowers and siliques, especially in the vasculature.

Its subcellular location is the nucleus. In terms of biological role, probable transcription factor that acts together with OBE1 for the maintenance and/or establishment of both the shoot and root meristems, probably by controlling the expression of the meristem genes such as WUS, PLT1 and PLT2 and of genes required for auxin responses. Promotes cell meristematic activity via the WUSCHEL-CLAVATA pathway. Involved in the development of the basal pole and in auxin-mediated root and vascular development in the embryo. Confers sensitivity to turnip mosaic virus (TuMV) probably by promoting viral movement and multiplication via interaction with TuMV VPg. The polypeptide is Protein OBERON 2 (Arabidopsis thaliana (Mouse-ear cress)).